We begin with the raw amino-acid sequence, 218 residues long: UPF0319 protein swp_2242 (218 aa).

Residues 1–21 form the signal peptide; the sequence is MRLSQSVLTALLICVNSAAFA.

The protein belongs to the UPF0319 family.

This Shewanella piezotolerans (strain WP3 / JCM 13877) protein is UPF0319 protein swp_2242.